The primary structure comprises 197 residues: MPMALDTSFSRAPAIAPQPKGIIDPATGLPVGATDPTFLSINDELADRGFLLTTADDLITWARTGSLMWMTFGLACCAVEMMQMSMPRYDAERFGFAPRASPRQSDVMIVAGTLTNKMAPALRKVYDQMPEPRYVISMGSCANGGGYYHYSYSVVRGCDRVVPVDIYVPGCPPSAEALLYGVLLLQKKIRRTGTIER.

[4Fe-4S] cluster-binding residues include C76, C77, C141, and C171.

Belongs to the complex I 20 kDa subunit family. In terms of assembly, NDH-1 is composed of 14 different subunits. Subunits NuoB, C, D, E, F, and G constitute the peripheral sector of the complex. Requires [4Fe-4S] cluster as cofactor.

The protein localises to the cell inner membrane. The enzyme catalyses a quinone + NADH + 5 H(+)(in) = a quinol + NAD(+) + 4 H(+)(out). Functionally, NDH-1 shuttles electrons from NADH, via FMN and iron-sulfur (Fe-S) centers, to quinones in the respiratory chain. The immediate electron acceptor for the enzyme in this species is believed to be ubiquinone. Couples the redox reaction to proton translocation (for every two electrons transferred, four hydrogen ions are translocated across the cytoplasmic membrane), and thus conserves the redox energy in a proton gradient. In Methylobacterium nodulans (strain LMG 21967 / CNCM I-2342 / ORS 2060), this protein is NADH-quinone oxidoreductase subunit B.